Consider the following 524-residue polypeptide: Excitatory amino acid transporter 3 (524 aa).

Residues M1–N18 are Cytoplasmic-facing. A helical membrane pass occupies residues W19–V38. Over R39 to R61 the chain is Extracellular. A helical membrane pass occupies residues M62–L82. Residues D83–R93 are Cytoplasmic-facing. A helical transmembrane segment spans residues A94 to V114. The Na(+) site is built by Y98, T101, and T102. Over S115–M205 the chain is Extracellular. N-linked (GlcNAc...) asparagine glycans are attached at residues N178 and N195. A helical transmembrane segment spans residues Y206–K229. Topologically, residues W230–D238 are cytoplasmic. A helical transmembrane segment spans residues F239–I266. The Extracellular segment spans residues A267–M286. A helical membrane pass occupies residues A287 to I308. Residues V309–P313 are Cytoplasmic-facing. An intramembrane region (discontinuously helical) is located at residues F314–A344. Residues S331 and S333 each coordinate L-aspartate. At E345–R353 the chain is on the cytoplasmic side. The chain crosses the membrane as a helical span at residues I354–F380. Na(+) contacts are provided by G362, T364, N366, and D368. T370 is a binding site for L-aspartate. The Extracellular segment spans residues I381–Q393. Positions I394–G427 form an intramembrane region, discontinuously helical. The Na(+) site is built by S405, I406, and A408. V411 contributes to the L-aspartate binding site. At L428 to D440 the chain is on the extracellular side. The helical transmembrane segment at W441–V462 threads the bilayer. The L-aspartate site is built by R447, T448, and N451. Positions 451 and 455 each coordinate Na(+). Topologically, residues E463 to F524 are cytoplasmic. 2 positions are modified to phosphoserine: S517 and S522.

The protein belongs to the dicarboxylate/amino acid:cation symporter (DAACS) (TC 2.A.23) family. SLC1A1 subfamily. In terms of assembly, homotrimer. Interacts with ARL6IP5. Interacts with RTN2 (via N-terminus); the interaction promotes cell surface expression of SLC1A1. Interacts with SORCS2; this interaction is important for normal expression at the cell membrane.

Its subcellular location is the cell membrane. The protein resides in the apical cell membrane. It is found in the synapse. The protein localises to the synaptosome. It localises to the early endosome membrane. Its subcellular location is the late endosome membrane. The protein resides in the recycling endosome membrane. The enzyme catalyses K(+)(in) + L-glutamate(out) + 3 Na(+)(out) + H(+)(out) = K(+)(out) + L-glutamate(in) + 3 Na(+)(in) + H(+)(in). It carries out the reaction K(+)(in) + L-aspartate(out) + 3 Na(+)(out) + H(+)(out) = K(+)(out) + L-aspartate(in) + 3 Na(+)(in) + H(+)(in). The catalysed reaction is D-aspartate(out) + K(+)(in) + 3 Na(+)(out) + H(+)(out) = D-aspartate(in) + K(+)(out) + 3 Na(+)(in) + H(+)(in). It catalyses the reaction K(+)(in) + L-cysteine(out) + 3 Na(+)(out) + H(+)(out) = K(+)(out) + L-cysteine(in) + 3 Na(+)(in) + H(+)(in). In terms of biological role, sodium-dependent, high-affinity amino acid transporter that mediates the uptake of L-glutamate and also L-aspartate and D-aspartate. Can also transport L-cysteine. Functions as a symporter that transports one amino acid molecule together with two or three Na(+) ions and one proton, in parallel with the counter-transport of one K(+) ion. Mediates Cl(-) flux that is not coupled to amino acid transport; this avoids the accumulation of negative charges due to aspartate and Na(+) symport. Plays an important role in L-glutamate and L-aspartate reabsorption in renal tubuli. Plays a redundant role in the rapid removal of released glutamate from the synaptic cleft, which is essential for terminating the postsynaptic action of glutamate. Contributes to glutathione biosynthesis and protection against oxidative stress via its role in L-glutamate and L-cysteine transport. Negatively regulated by ARL6IP5. This chain is Excitatory amino acid transporter 3 (SLC1A1), found in Bos taurus (Bovine).